The primary structure comprises 545 residues: Glucose-6-phosphate isomerase (545 aa).

Residue Glu349 is the Proton donor of the active site. Residues His380 and Lys509 contribute to the active site.

The protein belongs to the GPI family.

It is found in the cytoplasm. The catalysed reaction is alpha-D-glucose 6-phosphate = beta-D-fructose 6-phosphate. It functions in the pathway carbohydrate biosynthesis; gluconeogenesis. Its pathway is carbohydrate degradation; glycolysis; D-glyceraldehyde 3-phosphate and glycerone phosphate from D-glucose: step 2/4. Its function is as follows. Catalyzes the reversible isomerization of glucose-6-phosphate to fructose-6-phosphate. This chain is Glucose-6-phosphate isomerase, found in Chelativorans sp. (strain BNC1).